The primary structure comprises 511 residues: L-arabinose isomerase (511 aa).

Mn(2+) is bound by residues Glu316, Glu343, His360, and His459.

Belongs to the arabinose isomerase family. It depends on Mn(2+) as a cofactor.

The catalysed reaction is beta-L-arabinopyranose = L-ribulose. It functions in the pathway carbohydrate degradation; L-arabinose degradation via L-ribulose; D-xylulose 5-phosphate from L-arabinose (bacterial route): step 1/3. Functionally, catalyzes the conversion of L-arabinose to L-ribulose. This chain is L-arabinose isomerase, found in Arthrobacter sp. (strain FB24).